The chain runs to 232 residues: Large ribosomal subunit protein uL1 (232 aa).

The protein belongs to the universal ribosomal protein uL1 family. As to quaternary structure, part of the 50S ribosomal subunit.

In terms of biological role, binds directly to 23S rRNA. The L1 stalk is quite mobile in the ribosome, and is involved in E site tRNA release. Functionally, protein L1 is also a translational repressor protein, it controls the translation of the L11 operon by binding to its mRNA. The chain is Large ribosomal subunit protein uL1 from Xanthomonas axonopodis pv. citri (strain 306).